Consider the following 377-residue polypeptide: MTQEPFREELAYDRMPTLERGRQDPASYAPDAKPSDLQLSKRLPPCFSHKTWVFSVLMGSCLLVTSGFSLYLGNVFPAEMDYLRCAAGSCIPSAIVSFTVSRRNANVIPNFQILFVSTFAVTTTCLIWFGCKLVLNPSAININFNLILLLLLELLMAATVIIAARSSEEDCKKKKGSMSDSANILDEVPFPARVLKSYSVVEVIAGISAVLGGIIALNVDDSVSGPHLSVTFFWILVACFPSAIASHVAAECPSKCLVEVLIAISSLTSPLLFTASGYLSFSIMRIVEMFKDYPPAIKPSYDVLLLLLLLVLLLQAGLNTGTAIQCVRFKVSARLQGASWDTQNGPQERLAGEVARSPLKEFDKEKAWRAVVVQMAQ.

The span at 1–23 (MTQEPFREELAYDRMPTLERGRQ) shows a compositional bias: basic and acidic residues. Residues 1–36 (MTQEPFREELAYDRMPTLERGRQDPASYAPDAKPSD) form a disordered region. 4 helical membrane passes run 52 to 72 (WVFS…SLYL), 82 to 100 (YLRC…SFTV), 111 to 131 (FQIL…WFGC), and 144 to 164 (FNLI…IIAA). Phosphoserine occurs at positions 177 and 179. The next 4 membrane-spanning stretches (helical) occupy residues 199–219 (SVVE…ALNV), 230–250 (VTFF…HVAA), 257–277 (LVEV…TASG), and 304–324 (LLLL…GTAI).

In terms of assembly, interacts with ATP1B1. Part of a complex containing ATP1B1, TRPV4, AQP4 and HEPACAM. In terms of tissue distribution, expressed in the brain, with highest levels found in the amygdala, nucleus caudatus, thalamus and hippocampus.

It localises to the membrane. It is found in the cell membrane. The protein resides in the cytoplasm. Its subcellular location is the perinuclear region. The protein localises to the endoplasmic reticulum. Its function is as follows. Transmembrane protein mainly expressed in brain astrocytes that may play a role in transport across the blood-brain and brain-cerebrospinal fluid barriers. Regulates the response of astrocytes to hypo-osmosis by promoting calcium influx. May function as regulatory protein of membrane protein complexes such as ion channels. This Homo sapiens (Human) protein is Membrane protein MLC1.